Consider the following 197-residue polypeptide: Ribosome maturation factor RimP (197 aa).

The protein belongs to the RimP family.

It localises to the cytoplasm. In terms of biological role, required for maturation of 30S ribosomal subunits. This is Ribosome maturation factor RimP from Acidovorax ebreus (strain TPSY) (Diaphorobacter sp. (strain TPSY)).